The chain runs to 191 residues: Adenylate kinase (191 aa).

An ATP-binding site is contributed by 10–15 (AAGKGT). The NMP stretch occupies residues 30–59 (STGDMLRAAIASGSELGQRVKGVLDRGELV). AMP-binding positions include Thr-31, Arg-36, 57 to 59 (ELV), 85 to 88 (GFPR), and Gln-92. Residues 126 to 136 (KRFEEQGRPDD) form an LID region. Residue Arg-127 participates in ATP binding. AMP is bound by residues Arg-133 and Arg-144. Gly-172 contributes to the ATP binding site.

Belongs to the adenylate kinase family. As to quaternary structure, monomer.

The protein localises to the cytoplasm. It catalyses the reaction AMP + ATP = 2 ADP. It functions in the pathway purine metabolism; AMP biosynthesis via salvage pathway; AMP from ADP: step 1/1. Functionally, catalyzes the reversible transfer of the terminal phosphate group between ATP and AMP. Plays an important role in cellular energy homeostasis and in adenine nucleotide metabolism. The protein is Adenylate kinase of Caulobacter vibrioides (strain ATCC 19089 / CIP 103742 / CB 15) (Caulobacter crescentus).